Reading from the N-terminus, the 344-residue chain is BURP domain-containing protein 16 (344 aa).

The signal sequence occupies residues 1 to 25 (MATSFLFSLILLLITALSLPFPLHA). N-linked (GlcNAc...) asparagine glycans are attached at residues Asn-90, Asn-120, Asn-181, and Asn-333. Residues 128-341 (FFREQELKEG…FNGSMTWVIA (214 aa)) enclose the BURP domain.

In terms of tissue distribution, expressed in roots, stems, leaves and panicles.

The polypeptide is BURP domain-containing protein 16 (BURP16) (Oryza sativa subsp. japonica (Rice)).